The sequence spans 511 residues: Synaptotagmin-6 (511 aa).

The Vesicular portion of the chain corresponds to 1–59 (MSGVWGAGGPRCQAALAVLASLCRARPPPLGLDVETCQSFELQPPEQSPSAADSGTSVS). The cysteine motif stretch occupies residues 12–38 (CQAALAVLASLCRARPPPLGLDVETCQ). A helical membrane pass occupies residues 60–80 (LLAVVVIVCGVALVAVFFFLF). Topologically, residues 81-511 (WKLCWMPWRN…KSFKEGTPRL (431 aa)) are cytoplasmic. Over residues 93–103 (ASSPSSANPAS) the composition is skewed to low complexity. 2 disordered regions span residues 93–118 (ASSPSSANPASEILQSPSSRGNMADK) and 157–182 (TKLQRQTTEPASSTRHTSFKRHLPRQ). Residues 160 to 172 (QRQTTEPASSTRH) are compositionally biased toward polar residues. At Ser217 the chain carries Phosphoserine. 2 consecutive C2 domains span residues 230–351 (SCGK…SIWK) and 362–495 (DLGE…AHWH). Ca(2+) is bound by residues Asp261, Asp267, Asp319, Phe320, Asp321, Ser324, Asp327, Asp393, Asp399, Asp453, and Asp455. The interval 483–511 (MLAYPRKPIAHWHCLAEVKKSFKEGTPRL) is necessary for cell membrane association (isoform 2).

Belongs to the synaptotagmin family. Isoform 1: Homodimer; disulfide-linked via the cysteine motif. Isoform 1: Can also form heterodimers with SYT3, SYT7, SYT9 and SYT10. Isoform 1: Interacts with STX1A, STX1B and STX2; the interaction is Ca(2+)-dependent. Isoform 2: Is not able to form homodimer and heterodimers. The cofactor is Ca(2+).

It is found in the cytoplasmic vesicle. The protein resides in the secretory vesicle. Its subcellular location is the synaptic vesicle membrane. It localises to the membrane. The protein localises to the cytoplasm. It is found in the cytosol. The protein resides in the cell membrane. In terms of biological role, may be involved in Ca(2+)-dependent exocytosis of secretory vesicles through Ca(2+) and phospholipid binding to the C2 domain or may serve as Ca(2+) sensors in the process of vesicular trafficking and exocytosis. May mediate Ca(2+)-regulation of exocytosis in acrosomal reaction in sperm. The protein is Synaptotagmin-6 (Syt6) of Rattus norvegicus (Rat).